A 190-amino-acid chain; its full sequence is Potassium-transporting ATPase KdpC subunit (190 aa).

The chain crosses the membrane as a helical span at residues 10 to 30 (VLLLVLTGLTGFAYPLLSTAI).

It belongs to the KdpC family. In terms of assembly, the system is composed of three essential subunits: KdpA, KdpB and KdpC.

The protein localises to the cell inner membrane. Functionally, part of the high-affinity ATP-driven potassium transport (or Kdp) system, which catalyzes the hydrolysis of ATP coupled with the electrogenic transport of potassium into the cytoplasm. This subunit acts as a catalytic chaperone that increases the ATP-binding affinity of the ATP-hydrolyzing subunit KdpB by the formation of a transient KdpB/KdpC/ATP ternary complex. This chain is Potassium-transporting ATPase KdpC subunit, found in Sorangium cellulosum (strain So ce56) (Polyangium cellulosum (strain So ce56)).